We begin with the raw amino-acid sequence, 357 residues long: 3-isopropylmalate dehydrogenase, chloroplastic (357 aa).

The N-terminal 29 residues, 1-29, are a transit peptide targeting the chloroplast; it reads MALQIAKRLLRCRADSVASSVRFFDRTFT. Substrate-binding residues include arginine 120, arginine 130, arginine 151, and aspartate 238. Aspartate 238, aspartate 262, and aspartate 266 together coordinate Mg(2+). 296-308 contributes to the NAD(+) binding site; it reads GSAPDIAGKNLAN.

Belongs to the isocitrate and isopropylmalate dehydrogenases family. In terms of assembly, homodimer. The cofactor is Mg(2+). Requires Mn(2+) as cofactor.

Its subcellular location is the plastid. It is found in the chloroplast. It carries out the reaction (2R,3S)-3-isopropylmalate + NAD(+) = 4-methyl-2-oxopentanoate + CO2 + NADH. It functions in the pathway amino-acid biosynthesis; L-leucine biosynthesis; L-leucine from 3-methyl-2-oxobutanoate: step 3/4. Catalyzes the oxidation of 3-carboxy-2-hydroxy-4-methylpentanoate (3-isopropylmalate) to 3-carboxy-4-methyl-2-oxopentanoate. The product decarboxylates to 4-methyl-2 oxopentanoate. The chain is 3-isopropylmalate dehydrogenase, chloroplastic from Solanum tuberosum (Potato).